Here is a 220-residue protein sequence, read N- to C-terminus: 7-cyano-7-deazaguanine synthase 1 (220 aa).

Residue 10-20 (FSGGIDSTVLL) coordinates ATP. Zn(2+) contacts are provided by Cys-183, Cys-191, Cys-194, and Cys-197.

The protein belongs to the QueC family. As to quaternary structure, homodimer. Zn(2+) is required as a cofactor.

It carries out the reaction 7-carboxy-7-deazaguanine + NH4(+) + ATP = 7-cyano-7-deazaguanine + ADP + phosphate + H2O + H(+). The protein operates within purine metabolism; 7-cyano-7-deazaguanine biosynthesis. Functionally, catalyzes the ATP-dependent conversion of 7-carboxy-7-deazaguanine (CDG) to 7-cyano-7-deazaguanine (preQ(0)). The sequence is that of 7-cyano-7-deazaguanine synthase 1 from Desulfitobacterium hafniense (strain Y51).